We begin with the raw amino-acid sequence, 226 residues long: Glutathione peroxidase 3 (226 aa).

A signal peptide spans 1 to 24; sequence MARLFRASCLLSLLLAGFIPPSQG. Sec-73 is a catalytic residue. Position 73 (Sec-73) is a non-standard amino acid, selenocysteine.

The protein belongs to the glutathione peroxidase family. Homotetramer. Secreted in plasma.

It localises to the secreted. It catalyses the reaction 2 glutathione + H2O2 = glutathione disulfide + 2 H2O. The enzyme catalyses tert-butyl hydroperoxide + 2 glutathione = tert-butanol + glutathione disulfide + H2O. Functionally, protects cells and enzymes from oxidative damage, by catalyzing the reduction of hydrogen peroxide, lipid peroxides and organic hydroperoxide, by glutathione. The polypeptide is Glutathione peroxidase 3 (Bos taurus (Bovine)).